Consider the following 234-residue polypeptide: Glutathione S-transferase U16 (234 aa).

The 81-residue stretch at 5–85 (EEVKLLGVWY…YIDETWNSSA (81 aa)) folds into the GST N-terminal domain. Glutathione-binding positions include 15-16 (SP), 42-43 (SK), 56-57 (KV), and 69-70 (ES). The GST C-terminal domain occupies 92–219 (HPYDRALARF…APEIEKVAEF (128 aa)).

This sequence belongs to the GST superfamily. Tau family.

It is found in the cytoplasm. It localises to the cytosol. It carries out the reaction RX + glutathione = an S-substituted glutathione + a halide anion + H(+). Functionally, may be involved in the conjugation of reduced glutathione to a wide number of exogenous and endogenous hydrophobic electrophiles and have a detoxification role against certain herbicides. This chain is Glutathione S-transferase U16 (GSTU16), found in Arabidopsis thaliana (Mouse-ear cress).